The sequence spans 794 residues: Mitochondrial intermediate peptidase (794 aa).

A mitochondrion-targeting transit peptide spans Met1–Leu39. His581 provides a ligand contact to Zn(2+). Glu582 is an active-site residue. Zn(2+)-binding residues include His585 and His588.

The protein belongs to the peptidase M3 family. Zn(2+) is required as a cofactor.

It is found in the mitochondrion matrix. It carries out the reaction Release of an N-terminal octapeptide as second stage of processing of some proteins imported into the mitochondrion.. Its function is as follows. Cleaves proteins, imported into the mitochondrion, to their mature size. While most mitochondrial precursor proteins are processed to the mature form in one step by mitochondrial processing peptidase (MPP), the sequential cleavage by MIP of an octapeptide after initial processing by MPP is a required step for a subgroup of nuclear-encoded precursor proteins destined for the matrix or the inner membrane. The protein is Mitochondrial intermediate peptidase (OCT1) of Debaryomyces hansenii (strain ATCC 36239 / CBS 767 / BCRC 21394 / JCM 1990 / NBRC 0083 / IGC 2968) (Yeast).